A 207-amino-acid polypeptide reads, in one-letter code: Interleukin-6 (207 aa).

A signal peptide spans 1-18; it reads MKFFSIASLGLLLVVATA. The disordered stretch occupies residues 26-47; the sequence is REDGENSVTRNKPTRASSGKTR. Over residues 31–44 the composition is skewed to polar residues; that stretch reads NSVTRNKPTRASSG. The cysteines at positions 65 and 71 are disulfide-linked. Serine 74 carries the post-translational modification Phosphoserine. Cysteines 94 and 104 form a disulfide.

The protein belongs to the IL-6 superfamily. Component of a hexamer of two molecules each of IL6, IL6R and IL6ST; first binds to IL6R to associate with the signaling subunit IL6ST. Interacts with IL6R (via the N-terminal ectodomain); this interaction may be affected by IL6R-binding with SORL1, hence decreasing IL6 cis signaling. Interacts with SORL1 (via the N-terminal ectodomain); this interaction leads to IL6 internalization and lysosomal degradation. May form a trimeric complex with the soluble SORL1 ectodomain and soluble IL6R receptor; this interaction might stabilize circulating IL6, hence promoting IL6 trans signaling.

Its subcellular location is the secreted. Cytokine with a wide variety of biological functions in immunity, tissue regeneration, and metabolism. Binds to IL6R, then the complex associates to the signaling subunit IL6ST/gp130 to trigger the intracellular IL6-signaling pathway. The interaction with the membrane-bound IL6R and IL6ST stimulates 'classic signaling', whereas the binding of IL6 and soluble IL6R to IL6ST stimulates 'trans-signaling'. Alternatively, 'cluster signaling' occurs when membrane-bound IL6:IL6R complexes on transmitter cells activate IL6ST receptors on neighboring receiver cells. Its function is as follows. IL6 is a potent inducer of the acute phase response. Rapid production of IL6 contributes to host defense during infection and tissue injury, but excessive IL6 synthesis is involved in disease pathology. In the innate immune response, is synthesized by myeloid cells, such as macrophages and dendritic cells, upon recognition of pathogens through toll-like receptors (TLRs) at the site of infection or tissue injury. In the adaptive immune response, is required for the differentiation of B cells into immunoglobulin-secreting cells. Plays a major role in the differentiation of CD4(+) T cell subsets. Essential factor for the development of T follicular helper (Tfh) cells that are required for the induction of germinal-center formation. Required to drive naive CD4(+) T cells to the Th17 lineage. Also required for proliferation of myeloma cells and the survival of plasmablast cells. In terms of biological role, acts as an essential factor in bone homeostasis and on vessels directly or indirectly by induction of VEGF, resulting in increased angiogenesis activity and vascular permeability. Induces, through 'trans-signaling' and synergistically with IL1B and TNF, the production of VEGF. Involved in metabolic controls, is discharged into the bloodstream after muscle contraction increasing lipolysis and improving insulin resistance. 'Trans-signaling' in central nervous system also regulates energy and glucose homeostasis. Mediates, through GLP-1, crosstalk between insulin-sensitive tissues, intestinal L cells and pancreatic islets to adapt to changes in insulin demand. Also acts as a myokine. Plays a protective role during liver injury, being required for maintenance of tissue regeneration. Also has a pivotal role in iron metabolism by regulating HAMP/hepcidin expression upon inflammation or bacterial infection. Through activation of IL6ST-YAP-NOTCH pathway, induces inflammation-induced epithelial regeneration. This Marmota monax (Woodchuck) protein is Interleukin-6 (IL6).